The following is a 363-amino-acid chain: UDP-N-acetylglucosamine--N-acetylmuramyl-(pentapeptide) pyrophosphoryl-undecaprenol N-acetylglucosamine transferase (363 aa).

UDP-N-acetyl-alpha-D-glucosamine-binding positions include 10–12, Asn124, Ser195, Ile250, and Gln295; that span reads TGG.

It belongs to the glycosyltransferase 28 family. MurG subfamily.

Its subcellular location is the cell membrane. The enzyme catalyses di-trans,octa-cis-undecaprenyl diphospho-N-acetyl-alpha-D-muramoyl-L-alanyl-D-glutamyl-meso-2,6-diaminopimeloyl-D-alanyl-D-alanine + UDP-N-acetyl-alpha-D-glucosamine = di-trans,octa-cis-undecaprenyl diphospho-[N-acetyl-alpha-D-glucosaminyl-(1-&gt;4)]-N-acetyl-alpha-D-muramoyl-L-alanyl-D-glutamyl-meso-2,6-diaminopimeloyl-D-alanyl-D-alanine + UDP + H(+). It functions in the pathway cell wall biogenesis; peptidoglycan biosynthesis. In terms of biological role, cell wall formation. Catalyzes the transfer of a GlcNAc subunit on undecaprenyl-pyrophosphoryl-MurNAc-pentapeptide (lipid intermediate I) to form undecaprenyl-pyrophosphoryl-MurNAc-(pentapeptide)GlcNAc (lipid intermediate II). The polypeptide is UDP-N-acetylglucosamine--N-acetylmuramyl-(pentapeptide) pyrophosphoryl-undecaprenol N-acetylglucosamine transferase (Halalkalibacterium halodurans (strain ATCC BAA-125 / DSM 18197 / FERM 7344 / JCM 9153 / C-125) (Bacillus halodurans)).